The primary structure comprises 465 residues: Lactaldehyde dehydrogenase (465 aa).

220 to 225 lines the NAD(+) pocket; sequence GSVEVG. Residues E240 and C274 contribute to the active site.

It belongs to the aldehyde dehydrogenase family. Homotetramer.

It catalyses the reaction (S)-lactaldehyde + NAD(+) + H2O = (S)-lactate + NADH + 2 H(+). The protein operates within cofactor biosynthesis; coenzyme F420 biosynthesis. Involved in F420 biosynthesis through the oxidation of lactaldehyde to lactate. This Methanococcus maripaludis (strain DSM 14266 / JCM 13030 / NBRC 101832 / S2 / LL) protein is Lactaldehyde dehydrogenase.